We begin with the raw amino-acid sequence, 509 residues long: 2,3-bisphosphoglycerate-independent phosphoglycerate mutase (509 aa).

Aspartate 11 is a Mn(2+) binding site. The residue at position 35 (tyrosine 35) is a Phosphotyrosine. Serine 61 is a Mn(2+) binding site. The Phosphoserine intermediate role is filled by serine 61. Substrate-binding positions include histidine 122, 152 to 153 (RD), arginine 184, arginine 190, 260 to 263 (RPDR), and lysine 335. Positions 402, 406, 443, 444, and 461 each coordinate Mn(2+).

The protein belongs to the BPG-independent phosphoglycerate mutase family. As to quaternary structure, monomer. It depends on Mn(2+) as a cofactor.

It catalyses the reaction (2R)-2-phosphoglycerate = (2R)-3-phosphoglycerate. It functions in the pathway carbohydrate degradation; glycolysis; pyruvate from D-glyceraldehyde 3-phosphate: step 3/5. In terms of biological role, essential for rapid growth and for sporulation. Catalyzes the interconversion of 2-phosphoglycerate and 3-phosphoglycerate. This Bacillus cereus (strain ATCC 14579 / DSM 31 / CCUG 7414 / JCM 2152 / NBRC 15305 / NCIMB 9373 / NCTC 2599 / NRRL B-3711) protein is 2,3-bisphosphoglycerate-independent phosphoglycerate mutase.